The following is a 49-amino-acid chain: Large ribosomal subunit protein bL33B (49 aa).

It belongs to the bacterial ribosomal protein bL33 family.

The sequence is that of Large ribosomal subunit protein bL33B from Levilactobacillus brevis (strain ATCC 367 / BCRC 12310 / CIP 105137 / JCM 1170 / LMG 11437 / NCIMB 947 / NCTC 947) (Lactobacillus brevis).